We begin with the raw amino-acid sequence, 363 residues long: UDP-N-acetylglucosamine--N-acetylmuramyl-(pentapeptide) pyrophosphoryl-undecaprenol N-acetylglucosamine transferase (363 aa).

Residues 10-12, Asn124, Arg161, Ser195, and Gln291 contribute to the UDP-N-acetyl-alpha-D-glucosamine site; that span reads TAG.

Belongs to the glycosyltransferase 28 family. MurG subfamily.

The protein localises to the cell membrane. The enzyme catalyses di-trans,octa-cis-undecaprenyl diphospho-N-acetyl-alpha-D-muramoyl-L-alanyl-D-glutamyl-meso-2,6-diaminopimeloyl-D-alanyl-D-alanine + UDP-N-acetyl-alpha-D-glucosamine = di-trans,octa-cis-undecaprenyl diphospho-[N-acetyl-alpha-D-glucosaminyl-(1-&gt;4)]-N-acetyl-alpha-D-muramoyl-L-alanyl-D-glutamyl-meso-2,6-diaminopimeloyl-D-alanyl-D-alanine + UDP + H(+). It participates in cell wall biogenesis; peptidoglycan biosynthesis. In terms of biological role, cell wall formation. Catalyzes the transfer of a GlcNAc subunit on undecaprenyl-pyrophosphoryl-MurNAc-pentapeptide (lipid intermediate I) to form undecaprenyl-pyrophosphoryl-MurNAc-(pentapeptide)GlcNAc (lipid intermediate II). The protein is UDP-N-acetylglucosamine--N-acetylmuramyl-(pentapeptide) pyrophosphoryl-undecaprenol N-acetylglucosamine transferase of Streptomyces avermitilis (strain ATCC 31267 / DSM 46492 / JCM 5070 / NBRC 14893 / NCIMB 12804 / NRRL 8165 / MA-4680).